We begin with the raw amino-acid sequence, 336 residues long: Speedy protein E1 (336 aa).

The disordered stretch occupies residues 16 to 50 (GVDPSPPCRSLGWKRKREWSDESEEEPEKELAPEP). Over residues 36–50 (DESEEEPEKELAPEP) the composition is skewed to acidic residues.

The protein belongs to the Speedy/Ringo family. As to expression, predominantly expressed in testis and heart.

In Homo sapiens (Human), this protein is Speedy protein E1.